The primary structure comprises 130 residues: UPF0102 protein RPA0323 (130 aa).

This sequence belongs to the UPF0102 family.

This Rhodopseudomonas palustris (strain ATCC BAA-98 / CGA009) protein is UPF0102 protein RPA0323.